The primary structure comprises 122 residues: Large ribosomal subunit protein uL14 (122 aa).

The protein belongs to the universal ribosomal protein uL14 family. As to quaternary structure, part of the 50S ribosomal subunit. Forms a cluster with proteins L3 and L19. In the 70S ribosome, L14 and L19 interact and together make contacts with the 16S rRNA in bridges B5 and B8.

In terms of biological role, binds to 23S rRNA. Forms part of two intersubunit bridges in the 70S ribosome. This Thermoanaerobacter pseudethanolicus (strain ATCC 33223 / 39E) (Clostridium thermohydrosulfuricum) protein is Large ribosomal subunit protein uL14.